Consider the following 178-residue polypeptide: Probable DNA-directed RNA polymerase subunit delta (178 aa).

Residues 14–81 form the HTH HARE-type domain; sequence LSMIEVAHAI…GENTWGLRTW (68 aa). Positions 120–143 are enriched in acidic residues; that stretch reads DDDVIDYDSDDPEDEEVEAEDTTS. The disordered stretch occupies residues 120-178; that stretch reads DDDVIDYDSDDPEDEEVEAEDTTSDDAPAFEDLSNDDDTDVLPDGIEGQLSELNEDDEN.

The protein belongs to the RpoE family. In terms of assembly, RNAP is composed of a core of 2 alpha, a beta and a beta' subunits. The core is associated with a delta subunit and one of several sigma factors.

Its function is as follows. Participates in both the initiation and recycling phases of transcription. In the presence of the delta subunit, RNAP displays an increased specificity of transcription, a decreased affinity for nucleic acids, and an increased efficiency of RNA synthesis because of enhanced recycling. The chain is Probable DNA-directed RNA polymerase subunit delta from Pediococcus pentosaceus (strain ATCC 25745 / CCUG 21536 / LMG 10740 / 183-1w).